The following is a 1128-amino-acid chain: Mastermind-like protein 2 (1128 aa).

Disordered stretches follow at residues 1–22 and 81–167; these read MGDT…GAGL and QHGQ…GDQR. The span at 12–22 shows a compositional bias: gly residues; that stretch reads GGLGGAPGAGL. Residues 113–122 show a composition bias toward low complexity; it reads PTASQTAAPA. A Phosphoserine modification is found at S177. Disordered stretches follow at residues 343–509, 521–649, 677–714, 758–794, and 1039–1073; these read FNID…GSNQ, SPSA…SNQP, QVSQ…GYMN, QDQI…GSST, and GTGL…QGTD. Composition is skewed to polar residues over residues 347-357 and 374-387; these read LGQQSQRSTPR and GLTQ…QLRP. The span at 395-426 shows a compositional bias: low complexity; sequence SMASSGLSASSPIPSVPQSQAQPPPATGAARA. Over residues 431 to 446 the composition is skewed to polar residues; sequence QEVSHAQQLKQIAANR. Low complexity-rich tracts occupy residues 453 to 473 and 484 to 497; these read HQQQ…SAGP and PSPS…SPQS. The segment covering 566-584 has biased composition (polar residues); that stretch reads NSDQANQQMPSVLPSQSKP. Residues 590-649 are compositionally biased toward low complexity; sequence TQQQPQQSSITVQPQQQQQQPQQQQQPQQQQQPQPQQQQQQQPQAQQPAAQPTQPLSNQP. Polar residues-rich tracts occupy residues 677–695, 778–794, and 1039–1052; these read QVSQ…QNAG, NVGN…GSST, and GTGL…SQPP.

Belongs to the mastermind family. In terms of assembly, interacts through its N-terminal region with the ankyrin repeat region of the Notch proteins NOTCH1, NOTCH2, NOTCH3 and NOTCH4. Forms a DNA-binding complex with Notch proteins and RBPSUH/RBP-J kappa.

Its subcellular location is the nucleus speckle. Acts as a transcriptional coactivator for NOTCH proteins. Has been shown to amplify NOTCH-induced transcription of HES1. Potentiates activation by NOTCH3 and NOTCH4 more efficiently than MAML1 or MAML3. The protein is Mastermind-like protein 2 (MAML2) of Bos taurus (Bovine).